A 322-amino-acid chain; its full sequence is ATP-dependent 6-phosphofructokinase (322 aa).

G11 serves as a coordination point for ATP. 21-25 (RAVVR) is a binding site for ADP. ATP contacts are provided by residues 72–73 (RC) and 102–105 (GDGS). Mg(2+) is bound at residue D103. 127–129 (TID) serves as a coordination point for substrate. D129 functions as the Proton acceptor in the catalytic mechanism. ADP is bound at residue R156. Residues R164 and 171–173 (MGR) contribute to the substrate site. ADP is bound by residues 187-189 (GAE), R213, and 215-217 (KKH). Substrate contacts are provided by residues E224, R245, and 251–254 (HVQR).

Belongs to the phosphofructokinase type A (PFKA) family. ATP-dependent PFK group I subfamily. Prokaryotic clade 'B1' sub-subfamily. Homotetramer. It depends on Mg(2+) as a cofactor.

It is found in the cytoplasm. It carries out the reaction beta-D-fructose 6-phosphate + ATP = beta-D-fructose 1,6-bisphosphate + ADP + H(+). Its pathway is carbohydrate degradation; glycolysis; D-glyceraldehyde 3-phosphate and glycerone phosphate from D-glucose: step 3/4. With respect to regulation, allosterically activated by ADP and other diphosphonucleosides, and allosterically inhibited by phosphoenolpyruvate. Catalyzes the phosphorylation of D-fructose 6-phosphate to fructose 1,6-bisphosphate by ATP, the first committing step of glycolysis. The chain is ATP-dependent 6-phosphofructokinase from Staphylococcus aureus (strain JH1).